We begin with the raw amino-acid sequence, 143 residues long: 3-hydroxyacyl-[acyl-carrier-protein] dehydratase FabZ (143 aa).

Residue histidine 47 is part of the active site.

It belongs to the thioester dehydratase family. FabZ subfamily.

The protein localises to the cytoplasm. It catalyses the reaction a (3R)-hydroxyacyl-[ACP] = a (2E)-enoyl-[ACP] + H2O. Functionally, involved in unsaturated fatty acids biosynthesis. Catalyzes the dehydration of short chain beta-hydroxyacyl-ACPs and long chain saturated and unsaturated beta-hydroxyacyl-ACPs. This is 3-hydroxyacyl-[acyl-carrier-protein] dehydratase FabZ from Rickettsia canadensis (strain McKiel).